The primary structure comprises 79 residues: Phosphoribosylformylglycinamidine synthase subunit PurS (79 aa).

Belongs to the PurS family. In terms of assembly, homodimer. Part of the FGAM synthase complex composed of 1 PurL, 1 PurQ and 2 PurS subunits.

It is found in the cytoplasm. The catalysed reaction is N(2)-formyl-N(1)-(5-phospho-beta-D-ribosyl)glycinamide + L-glutamine + ATP + H2O = 2-formamido-N(1)-(5-O-phospho-beta-D-ribosyl)acetamidine + L-glutamate + ADP + phosphate + H(+). The protein operates within purine metabolism; IMP biosynthesis via de novo pathway; 5-amino-1-(5-phospho-D-ribosyl)imidazole from N(2)-formyl-N(1)-(5-phospho-D-ribosyl)glycinamide: step 1/2. In terms of biological role, part of the phosphoribosylformylglycinamidine synthase complex involved in the purines biosynthetic pathway. Catalyzes the ATP-dependent conversion of formylglycinamide ribonucleotide (FGAR) and glutamine to yield formylglycinamidine ribonucleotide (FGAM) and glutamate. The FGAM synthase complex is composed of three subunits. PurQ produces an ammonia molecule by converting glutamine to glutamate. PurL transfers the ammonia molecule to FGAR to form FGAM in an ATP-dependent manner. PurS interacts with PurQ and PurL and is thought to assist in the transfer of the ammonia molecule from PurQ to PurL. This is Phosphoribosylformylglycinamidine synthase subunit PurS from Mycobacterium leprae (strain TN).